We begin with the raw amino-acid sequence, 421 residues long: Ankyrin repeat and SOCS box protein 6 (421 aa).

ANK repeat units follow at residues 67–97, 102–131, 136–166, 170–205, 226–255, and 260–289; these read EGVS…NLNF, TYYT…DINR, HESS…DVNA, HGKT…DVKA, GGDK…DPSE, and ESLT…AYNC. The SOCS box domain occupies 360–415; it reads ALHFSLRQLESYPPPLKHLCRVAIRLYLQPWPVDVKVKALPLPDRLKWYLLSEHSG.

The protein belongs to the ankyrin SOCS box (ASB) family. In terms of assembly, binds APS. Identified in a complex with ELOB and ELOC. Interacts with CUL5 and RNF7. Interacts with SQSTM1.

The protein resides in the cytoplasm. It functions in the pathway protein modification; protein ubiquitination. Its function is as follows. Probable substrate-recognition component of a SCF-like ECS (Elongin-Cullin-SOCS-box protein) E3 ubiquitin-protein ligase complex which mediates the ubiquitination and subsequent proteasomal degradation of target proteins. May play a role in the regulation of cell proliferation and autophagy by promoting the ubiquitination and degradation of SQSTM1. This chain is Ankyrin repeat and SOCS box protein 6 (ASB6), found in Pongo abelii (Sumatran orangutan).